Reading from the N-terminus, the 399-residue chain is Tryptophan synthase beta chain (399 aa).

At K92 the chain carries N6-(pyridoxal phosphate)lysine.

It belongs to the TrpB family. As to quaternary structure, tetramer of two alpha and two beta chains. The cofactor is pyridoxal 5'-phosphate.

The catalysed reaction is (1S,2R)-1-C-(indol-3-yl)glycerol 3-phosphate + L-serine = D-glyceraldehyde 3-phosphate + L-tryptophan + H2O. It functions in the pathway amino-acid biosynthesis; L-tryptophan biosynthesis; L-tryptophan from chorismate: step 5/5. Functionally, the beta subunit is responsible for the synthesis of L-tryptophan from indole and L-serine. The sequence is that of Tryptophan synthase beta chain from Thiobacillus denitrificans (strain ATCC 25259 / T1).